A 301-amino-acid chain; its full sequence is Acetylglutamate kinase (301 aa).

Residues 72–73, arginine 94, and asparagine 199 contribute to the substrate site; that span reads GG.

Belongs to the acetylglutamate kinase family. ArgB subfamily.

It is found in the cytoplasm. The enzyme catalyses N-acetyl-L-glutamate + ATP = N-acetyl-L-glutamyl 5-phosphate + ADP. It functions in the pathway amino-acid biosynthesis; L-arginine biosynthesis; N(2)-acetyl-L-ornithine from L-glutamate: step 2/4. Functionally, catalyzes the ATP-dependent phosphorylation of N-acetyl-L-glutamate. The chain is Acetylglutamate kinase from Bartonella bacilliformis (strain ATCC 35685 / KC583 / Herrer 020/F12,63).